The sequence spans 847 residues: Glycogen phosphorylase, liver form (847 aa).

At A2 the chain carries N-acetylalanine. S15 is modified (phosphoserine; by PHK; in form phosphorylase a). AMP is bound by residues 43-45 (DRN), Y76, and R310. K364 is subject to N6-succinyllysine. At K470 the chain carries N6-acetyllysine. A phosphoserine mark is found at S524, S561, and S639. The residue at position 681 (K681) is an N6-(pyridoxal phosphate)lysine. N6-acetyllysine is present on K796.

Belongs to the glycogen phosphorylase family. As to quaternary structure, homodimer; enzymatically active. Interacts with PPP1R3B; recruits the phosphatase PP1 which dephosphorylates and inactivates PYGL/glycogen phosphorylase. It depends on pyridoxal 5'-phosphate as a cofactor. Post-translationally, acetylation, which is up-regulated by glucose and insulin and down-regulated by glucagon, inhibits the glycogen phosphorylase activity by promoting PPP1R3B-mediated recruitment of phosphatase PP1 and Ser-15 dephosphorylation. Phosphorylation at Ser-15 converts inactive phosphorylase b into active phosphorylase a. Dephosphorylation of Ser-15 by phosphatase PP1 inactivates the enzyme.

Its subcellular location is the cytoplasm. The protein localises to the cytosol. The enzyme catalyses [(1-&gt;4)-alpha-D-glucosyl](n) + phosphate = [(1-&gt;4)-alpha-D-glucosyl](n-1) + alpha-D-glucose 1-phosphate. With respect to regulation, allosterically regulated through the non-covalent binding of metabolites, being activated by AMP and inhibited by ATP, ADP, and glucose-6-phosphate. The activity is also controlled by post-translational modifications including phosphorylation and acetylation. Functionally, allosteric enzyme that catalyzes the rate-limiting step in glycogen catabolism, the phosphorolytic cleavage of glycogen to produce glucose-1-phosphate, and plays a central role in maintaining cellular and organismal glucose homeostasis. The protein is Glycogen phosphorylase, liver form of Homo sapiens (Human).